Reading from the N-terminus, the 363-residue chain is tRNA/tmRNA (uracil-C(5))-methyltransferase (363 aa).

Residues Q187, Y215, N220, E236, and D296 each coordinate S-adenosyl-L-methionine. The active-site Nucleophile is C321. Residue E355 is the Proton acceptor of the active site.

The protein belongs to the class I-like SAM-binding methyltransferase superfamily. RNA M5U methyltransferase family. TrmA subfamily.

It catalyses the reaction uridine(54) in tRNA + S-adenosyl-L-methionine = 5-methyluridine(54) in tRNA + S-adenosyl-L-homocysteine + H(+). It carries out the reaction uridine(341) in tmRNA + S-adenosyl-L-methionine = 5-methyluridine(341) in tmRNA + S-adenosyl-L-homocysteine + H(+). Its function is as follows. Dual-specificity methyltransferase that catalyzes the formation of 5-methyluridine at position 54 (m5U54) in all tRNAs, and that of position 341 (m5U341) in tmRNA (transfer-mRNA). The sequence is that of tRNA/tmRNA (uracil-C(5))-methyltransferase from Pseudomonas paraeruginosa (strain DSM 24068 / PA7) (Pseudomonas aeruginosa (strain PA7)).